The following is a 317-amino-acid chain: Sulfate adenylyltransferase subunit 2 (317 aa).

2 disordered regions span residues 1–21 (MPDSRPDTELSNPQSAKAPLD) and 298–317 (RAIDRDQSGSMEKKKREGYF).

It belongs to the PAPS reductase family. CysD subfamily. As to quaternary structure, heterodimer composed of CysD, the smaller subunit, and CysN.

It catalyses the reaction sulfate + ATP + H(+) = adenosine 5'-phosphosulfate + diphosphate. Its pathway is sulfur metabolism; hydrogen sulfide biosynthesis; sulfite from sulfate: step 1/3. Functionally, with CysN forms the ATP sulfurylase (ATPS) that catalyzes the adenylation of sulfate producing adenosine 5'-phosphosulfate (APS) and diphosphate, the first enzymatic step in sulfur assimilation pathway. APS synthesis involves the formation of a high-energy phosphoric-sulfuric acid anhydride bond driven by GTP hydrolysis by CysN coupled to ATP hydrolysis by CysD. The protein is Sulfate adenylyltransferase subunit 2 of Rhizobium johnstonii (strain DSM 114642 / LMG 32736 / 3841) (Rhizobium leguminosarum bv. viciae).